The chain runs to 839 residues: Heat shock 70 kDa protein 4L (839 aa).

Ser74 and Ser508 each carry phosphoserine. Residues 503 to 554 show a composition bias toward basic and acidic residues; it reads LEGDHSDAPMETETSFKNENKDNMDKMQVDQEEGHQKCHAEHTPEEEIDHTG. Positions 503–567 are disordered; it reads LEGDHSDAPM…KSAVSDKQDR (65 aa). Thr545 carries the phosphothreonine modification. Ser579 is subject to Phosphoserine. Position 761 is a phosphothreonine (Thr761). Residues 786–839 are disordered; the sequence is IYKPKPKAEVPEDKPKANSEHNGPMDGQSGTETKSDSTKDSSQHTKSSGEMEVD. Basic and acidic residues-rich tracts occupy residues 791-804 and 818-839; these read PKAEVPEDKPKANS and TKSDSTKDSSQHTKSSGEMEVD.

The protein belongs to the heat shock protein 70 family. In terms of assembly, homodimer.

It localises to the cytoplasm. Its subcellular location is the nucleus. Its function is as follows. Possesses chaperone activity in vitro where it inhibits aggregation of citrate synthase. The polypeptide is Heat shock 70 kDa protein 4L (HSPA4L) (Homo sapiens (Human)).